The following is a 632-amino-acid chain: DNA mismatch repair protein MutL (632 aa).

The disordered stretch occupies residues 376–397 (EQPQAEPRQSFTPGSGAGSGYQ).

This sequence belongs to the DNA mismatch repair MutL/HexB family.

Functionally, this protein is involved in the repair of mismatches in DNA. It is required for dam-dependent methyl-directed DNA mismatch repair. May act as a 'molecular matchmaker', a protein that promotes the formation of a stable complex between two or more DNA-binding proteins in an ATP-dependent manner without itself being part of a final effector complex. This Pseudomonas entomophila (strain L48) protein is DNA mismatch repair protein MutL.